A 356-amino-acid chain; its full sequence is Aminodeoxyfutalosine deaminase (356 aa).

Histidine 18 and histidine 20 together coordinate Zn(2+). Substrate contacts are provided by arginine 73, glutamate 140, and glycine 172. A Zn(2+)-binding site is contributed by histidine 199. Glutamate 202 serves as the catalytic Proton donor. Aspartate 287 is a Zn(2+) binding site.

The protein belongs to the metallo-dependent hydrolases superfamily. Adenosine and AMP deaminases family. It depends on Zn(2+) as a cofactor.

It carries out the reaction 6-amino-6-deoxyfutalosine + H2O + H(+) = futalosine + NH4(+). It participates in quinol/quinone metabolism; menaquinone biosynthesis. In terms of biological role, catalyzes the deamination of aminodeoxyfutalosine (AFL) into futalosine (FL), a step in the biosynthesis of menaquinone (MK, vitamin K2). Is very poorly efficient on 1-(6-amino-9H-purin-9-yl)-1-deoxy-N-ethyl-beta-D-ribofuranuronamide (NECA), adenosine, 5'-methylthioadenosine, 5'-deoxyadenosine, 2'-deoxyadenosine, and AMP as substrate. This Acidothermus cellulolyticus (strain ATCC 43068 / DSM 8971 / 11B) protein is Aminodeoxyfutalosine deaminase.